A 430-amino-acid chain; its full sequence is Aspartate aminotransferase, mitochondrial (430 aa).

A mitochondrion-targeting transit peptide spans 1 to 29; it reads MALLHSSRILSGMAAAFHPGLAAAASARA. Threonine 48 is modified (phosphothreonine). Lysine 59 carries the N6-acetyllysine modification. Glycine 65 serves as a coordination point for substrate. Lysine 73 carries the post-translational modification N6-acetyllysine; alternate. The residue at position 73 (lysine 73) is an N6-succinyllysine; alternate. Residue lysine 82 is modified to N6-acetyllysine. The residue at position 90 (lysine 90) is an N6-acetyllysine; alternate. Lysine 90 is subject to N6-succinyllysine; alternate. Tyrosine 96 bears the 3'-nitrotyrosine; alternate mark. At tyrosine 96 the chain carries Phosphotyrosine; alternate. N6-acetyllysine; alternate occurs at positions 107 and 122. Residues lysine 107 and lysine 122 each carry the N6-succinyllysine; alternate modification. Serine 143 carries the phosphoserine modification. The residue at position 159 (lysine 159) is an N6-acetyllysine; alternate. Lysine 159 bears the N6-succinyllysine; alternate mark. Tryptophan 162 provides a ligand contact to substrate. Residue lysine 185 is modified to N6-acetyllysine; alternate. Lysine 185 is subject to N6-succinyllysine; alternate. Asparagine 215 contributes to the substrate binding site. The residue at position 227 (lysine 227) is an N6-succinyllysine. Lysine 234 carries the N6-acetyllysine modification. Residues lysine 279 and lysine 296 each carry the N6-acetyllysine; alternate modification. Residue lysine 279 is modified to N6-(pyridoxal phosphate)lysine; alternate. Lysine 296 is modified (N6-succinyllysine; alternate). N6-acetyllysine is present on lysine 302. Lysine 309 carries the post-translational modification N6-acetyllysine; alternate. An N6-succinyllysine; alternate modification is found at lysine 309. Arginine 313 carries the asymmetric dimethylarginine modification. Lysine 338 is modified (N6-acetyllysine; alternate). Lysine 338 bears the N6-succinyllysine; alternate mark. Lysine 345 carries the N6-acetyllysine modification. Lysine 363 bears the N6-acetyllysine; alternate mark. N6-succinyllysine; alternate is present on lysine 363. N6-acetyllysine occurs at positions 364 and 387. An N6-acetyllysine; alternate mark is found at lysine 396 and lysine 404. N6-succinyllysine; alternate is present on residues lysine 396 and lysine 404. Residue arginine 407 participates in substrate binding.

This sequence belongs to the class-I pyridoxal-phosphate-dependent aminotransferase family. As to quaternary structure, homodimer. Pyridoxal 5'-phosphate serves as cofactor. In terms of processing, acetylation of Lys-296, Lys-345 and Lys-363 is observed in liver mitochondria from fasted mice but not from fed mice. Detected in brain (at protein level).

It localises to the mitochondrion matrix. It is found in the cell membrane. The catalysed reaction is L-aspartate + 2-oxoglutarate = oxaloacetate + L-glutamate. The enzyme catalyses L-kynurenine + 2-oxoglutarate = kynurenate + L-glutamate + H2O. In terms of biological role, catalyzes the irreversible transamination of the L-tryptophan metabolite L-kynurenine to form kynurenic acid (KA). As a member of the malate-aspartate shuttle, it has a key role in the intracellular NAD(H) redox balance. Is important for metabolite exchange between mitochondria and cytosol, and for amino acid metabolism. Facilitates cellular uptake of long-chain free fatty acids. The protein is Aspartate aminotransferase, mitochondrial (Got2) of Mus musculus (Mouse).